Consider the following 532-residue polypeptide: 56 kDa type-specific antigen (532 aa).

A signal peptide spans 1-22; sequence MKKIMLIASAMSALSLPFSASA. The chain crosses the membrane as a helical span at residues 67-87; that stretch reads TNGLPFGGTLAAGMTIAPGFR. Residues 401–428 are disordered; that stretch reads QEEDAKNQGEGDCKQQQGTSEKSKKGKD. Positions 403–413 are enriched in basic and acidic residues; it reads EDAKNQGEGDC. Residues 480–500 form a helical membrane-spanning segment; that stretch reads TGMVASGALGVAINAAEGVYV.

It localises to the cell membrane. Its function is as follows. May be an adherent factor for rickettsial adsorption to the host-cell surface and a determinant of virulence of individual rickettsial strain. It is the major outer membrane protein. The protein is 56 kDa type-specific antigen of Orientia tsutsugamushi (Rickettsia tsutsugamushi).